The sequence spans 131 residues: Large ribosomal subunit protein bL19 (131 aa).

The protein belongs to the bacterial ribosomal protein bL19 family.

In terms of biological role, this protein is located at the 30S-50S ribosomal subunit interface and may play a role in the structure and function of the aminoacyl-tRNA binding site. The sequence is that of Large ribosomal subunit protein bL19 from Anaeromyxobacter dehalogenans (strain 2CP-C).